Reading from the N-terminus, the 318-residue chain is NADH-ubiquinone oxidoreductase chain 1 (318 aa).

The next 8 membrane-spanning stretches (helical) occupy residues 2 to 22 (FMLN…FLTL), 68 to 88 (ITMF…MWIP), 100 to 120 (LGVL…LWSG), 147 to 167 (AIIL…TLII), 171 to 191 (YIWL…STLA), 217 to 237 (GGPF…MNAL), 254 to 273 (LYTT…FLWI), and 294 to 314 (LPLT…MAGI).

The protein belongs to the complex I subunit 1 family.

It is found in the mitochondrion inner membrane. The enzyme catalyses a ubiquinone + NADH + 5 H(+)(in) = a ubiquinol + NAD(+) + 4 H(+)(out). Functionally, core subunit of the mitochondrial membrane respiratory chain NADH dehydrogenase (Complex I) that is believed to belong to the minimal assembly required for catalysis. Complex I functions in the transfer of electrons from NADH to the respiratory chain. The immediate electron acceptor for the enzyme is believed to be ubiquinone. The sequence is that of NADH-ubiquinone oxidoreductase chain 1 (MT-ND1) from Hsunycteris thomasi (Thomas's nectar bat).